The following is a 457-amino-acid chain: V-type ATP synthase beta chain (457 aa).

This sequence belongs to the ATPase alpha/beta chains family.

Its function is as follows. Produces ATP from ADP in the presence of a proton gradient across the membrane. The V-type beta chain is a regulatory subunit. The sequence is that of V-type ATP synthase beta chain from Clostridioides difficile (strain 630) (Peptoclostridium difficile).